We begin with the raw amino-acid sequence, 976 residues long: MRGARGAWDFLCVLLLLLRVQTGSSQPSVSPGEPSPPSIHPGKSDLIVRVGDEIRLLCTDPGFVKWTFEILDETNENKQNEWITEKAEATNTGKYTCTNKHGLSNSIYVFVRDPAKLFLVDRSLYGKEDNDTLVRCPLTDPEVTNYSLKGCQGKPLPKDLRFIPDPKAGIMIKSVKRAYHRLCLHCSVDQEGKSVLSEKFILKVRPAFKAVPVVSVSKASYLLREGEEFTVTCTIKDVSSSVYSTWKRENSQTKLQEKYNSWHHGDFNYERQATLTISSARVNDSGVFMCYANNTFGSANVTTTLEVVDKGFINIFPMINTTVFVNDGENVDLIVEYEAFPKPEHQQWIYMNRTFTDKWEDYPKSENESNIRYVSELHLTRLKGTEGGTYTFLVSNSDVNAAIAFNVYVNTKPEILTYDRLVNGMLQCVAAGFPEPTIDWYFCPGTEQRCSASVLPVDVQTLNSSGPPFGKLVVQSSIDSSAFKHNGTVECKAYNDVGKTSAYFNFAFKGNNKEQIHPHTLFTPLLIGFVIVAGMMCIIVMILTYKYLQKPMYEVQWKVVEEINGNNYVYIDPTQLPYDHKWEFPRNRLSFGKTLGAGAFGKVVEATAYGLIKSDAAMTVAVKMLKPSAHLTEREALMSELKVLSYLGNHMNIVNLLGACTIGGPTLVITEYCCYGDLLNFLRRKRDSFICSKQEDHAEAALYKNLLHSKESSCSDSTNEYMDMKPGVSYVVPTKADKRRSVRIGSYIERDVTPAIMEDDELALDLEDLLSFSYQVAKGMAFLASKNCIHRDLAARNILLTHGRITKICDFGLARDIKNDSNYVVKGNARLPVKWMAPESIFNCVYTFESDVWSYGIFLWELFSLGSSPYPGMPVDSKFYKMIKEGFRMLSPEHAPAEMYDIMKTCWDADPLKRPTFKQIVQLIEKQISESTNHIYSNLANCSPNRQKPVVDHSVRINSVGSTASSSQPLLVHDDV.

An N-terminal signal peptide occupies residues 1–25; that stretch reads MRGARGAWDFLCVLLLLLRVQTGSS. Residues 26–524 lie on the Extracellular side of the membrane; the sequence is QPSVSPGEPS…QIHPHTLFTP (499 aa). Ig-like C2-type domains follow at residues 27 to 112, 121 to 205, 212 to 308, 317 to 410, and 413 to 507; these read PSVS…VFVR, DRSL…LKVR, PVVS…LEVV, PMIN…VYVN, and PEIL…FNFA. A disulfide bond links Cys-58 and Cys-97. Asn-130 and Asn-145 each carry an N-linked (GlcNAc...) asparagine glycan. Disulfide bonds link Cys-136–Cys-186, Cys-151–Cys-183, and Cys-233–Cys-290. N-linked (GlcNAc...) asparagine glycosylation is found at Asn-283, Asn-293, Asn-300, Asn-320, Asn-352, Asn-367, Asn-463, and Asn-486. Cys-428 and Cys-491 are oxidised to a cystine. A helical membrane pass occupies residues 525 to 545; it reads LLIGFVIVAGMMCIIVMILTY. The Cytoplasmic segment spans residues 546-976; that stretch reads KYLQKPMYEV…SQPLLVHDDV (431 aa). A phosphotyrosine; by autocatalysis mark is found at Tyr-547, Tyr-553, Tyr-568, and Tyr-570. Position 568 (Tyr-568) interacts with Mg(2+). An important for interaction with phosphotyrosine-binding proteins region spans residues 568–570; the sequence is YVY. Residues 589–937 form the Protein kinase domain; the sequence is LSFGKTLGAG…ISESTNHIYS (349 aa). ATP contacts are provided by residues 596–603, Lys-623, and 671–677; these read GAGAFGKV and EYCCYGD. Residues Tyr-703, Tyr-721, and Tyr-730 each carry the phosphotyrosine; by autocatalysis modification. Ser-741 and Ser-746 each carry phosphoserine; by PKC/PRKCA. The active-site Proton acceptor is Asp-792. Arg-796 is an ATP binding site. Mg(2+) is bound by residues Asn-797 and Asp-810. Ser-821 carries the post-translational modification Phosphoserine. Tyr-823 bears the Phosphotyrosine; by autocatalysis mark. Position 891 is a phosphoserine (Ser-891). Residues Tyr-900 and Tyr-936 each carry the phosphotyrosine; by autocatalysis modification. The residue at position 959 (Ser-959) is a Phosphoserine.

It belongs to the protein kinase superfamily. Tyr protein kinase family. CSF-1/PDGF receptor subfamily. Monomer in the absence of bound KITLG/SCF. Homodimer in the presence of bound KITLG/SCF, forming a heterotetramer with two KITLG/SCF molecules. Interacts (via phosphorylated tyrosine residues) with the adapter proteins GRB2 and GRB7 (via SH2 domain), and SH2B2/APS. Interacts (via C-terminus) with MPDZ (via the tenth PDZ domain). Interacts (via phosphorylated tyrosine residues) with PIK3R1 and PIK3 catalytic subunit. Interacts (via phosphorylated tyrosine) with CRK (isoform Crk-II), FYN, SHC1 and MATK/CHK (via SH2 domain). Interacts with LYN and FES/FPS. Interacts (via phosphorylated tyrosine residues) with the protein phosphatases PTPN6/SHP-1 (via SH2 domain), PTPN11/SHP-2 (via SH2 domain) and PTPRU. Interacts with PLCG1. Interacts with DOK1 and TEC. Interacts (KITLG/SCF-bound) with IL1RL1. Interacts with IL1RAP (independent of stimulation with KITLG/SCF). A mast cell-specific KITLG/SCF-induced interleukin-33 signaling complex contains IL1RL1, IL1RAP, KIT and MYD88. Ubiquitinated by SOCS6. KIT is rapidly ubiquitinated after autophosphorylation induced by KITLG/SCF binding, leading to internalization and degradation. In terms of processing, autophosphorylated on tyrosine residues. KITLG/SCF binding enhances autophosphorylation. Isoform 1 shows low levels of tyrosine phosphorylation in the absence of added KITLG/SCF (in vitro). Kinase activity is down-regulated by phosphorylation on serine residues by protein kinase C family members. Phosphorylation at Tyr-568 is required for interaction with PTPN11/SHP-2, CRK (isoform Crk-II) and members of the SRC tyrosine-protein kinase family. Phosphorylation at Tyr-570 is required for interaction with PTPN6/SHP-1. Phosphorylation at Tyr-703, Tyr-823 and Tyr-936 is important for interaction with GRB2. Phosphorylation at Tyr-721 is important for interaction with PIK3R1. Phosphorylation at Tyr-823 and Tyr-936 is important for interaction with GRB7. In testis, detected in spermatogonia in the basal layer and in interstitial Leydig cells but not in Sertoli cells or spermatocytes inside the seminiferous tubules (at protein level). Expression is maintained in ejaculated spermatozoa (at protein level).

The protein localises to the cell membrane. It localises to the cytoplasm. The enzyme catalyses L-tyrosyl-[protein] + ATP = O-phospho-L-tyrosyl-[protein] + ADP + H(+). Its activity is regulated as follows. Present in an inactive conformation in the absence of bound ligand. KITLG/SCF binding leads to dimerization and activation by autophosphorylation on tyrosine residues. Activity is down-regulated by PRKCA-mediated phosphorylation on serine residues. Inhibited by imatinib/STI-571 (Gleevec) and sunitinib; these compounds maintain the kinase in an inactive conformation. Its function is as follows. Tyrosine-protein kinase that acts as a cell-surface receptor for the cytokine KITLG/SCF and plays an essential role in the regulation of cell survival and proliferation, hematopoiesis, stem cell maintenance, gametogenesis, mast cell development, migration and function, and in melanogenesis. In response to KITLG/SCF binding, KIT can activate several signaling pathways. Phosphorylates PIK3R1, PLCG1, SH2B2/APS and CBL. Activates the AKT1 signaling pathway by phosphorylation of PIK3R1, the regulatory subunit of phosphatidylinositol 3-kinase. Activated KIT also transmits signals via GRB2 and activation of RAS, RAF1 and the MAP kinases MAPK1/ERK2 and/or MAPK3/ERK1. Promotes activation of STAT family members STAT1, STAT3, STAT5A and STAT5B. Activation of PLCG1 leads to the production of the cellular signaling molecules diacylglycerol and inositol 1,4,5-trisphosphate. KIT signaling is modulated by protein phosphatases, and by rapid internalization and degradation of the receptor. Activated KIT promotes phosphorylation of the protein phosphatases PTPN6/SHP-1 and PTPRU, and of the transcription factors STAT1, STAT3, STAT5A and STAT5B. Promotes phosphorylation of PIK3R1, CBL, CRK (isoform Crk-II), LYN, MAPK1/ERK2 and/or MAPK3/ERK1, PLCG1, SRC and SHC1. This is Mast/stem cell growth factor receptor Kit (KIT) from Homo sapiens (Human).